Reading from the N-terminus, the 968-residue chain is RNA polymerase-associated protein RapA (968 aa).

A Helicase ATP-binding domain is found at 164 to 334 (DVGRRHAPRV…FARLRLLDPN (171 aa)). An ATP-binding site is contributed by 177–184 (DEVGLGKT). Residues 280–283 (DEAH) carry the DEAH box motif. The region spanning 490 to 685 (RVEWLMGYLT…ALKAQLEQGR (196 aa)) is the Helicase C-terminal domain.

This sequence belongs to the SNF2/RAD54 helicase family. RapA subfamily. In terms of assembly, interacts with the RNAP. Has a higher affinity for the core RNAP than for the holoenzyme. Its ATPase activity is stimulated by binding to RNAP.

Transcription regulator that activates transcription by stimulating RNA polymerase (RNAP) recycling in case of stress conditions such as supercoiled DNA or high salt concentrations. Probably acts by releasing the RNAP, when it is trapped or immobilized on tightly supercoiled DNA. Does not activate transcription on linear DNA. Probably not involved in DNA repair. The sequence is that of RNA polymerase-associated protein RapA from Salmonella choleraesuis (strain SC-B67).